Reading from the N-terminus, the 237-residue chain is Leucyl/phenylalanyl-tRNA--protein transferase (237 aa).

The protein belongs to the L/F-transferase family.

The protein resides in the cytoplasm. The catalysed reaction is N-terminal L-lysyl-[protein] + L-leucyl-tRNA(Leu) = N-terminal L-leucyl-L-lysyl-[protein] + tRNA(Leu) + H(+). It carries out the reaction N-terminal L-arginyl-[protein] + L-leucyl-tRNA(Leu) = N-terminal L-leucyl-L-arginyl-[protein] + tRNA(Leu) + H(+). It catalyses the reaction L-phenylalanyl-tRNA(Phe) + an N-terminal L-alpha-aminoacyl-[protein] = an N-terminal L-phenylalanyl-L-alpha-aminoacyl-[protein] + tRNA(Phe). Its function is as follows. Functions in the N-end rule pathway of protein degradation where it conjugates Leu, Phe and, less efficiently, Met from aminoacyl-tRNAs to the N-termini of proteins containing an N-terminal arginine or lysine. The chain is Leucyl/phenylalanyl-tRNA--protein transferase from Shewanella baltica (strain OS155 / ATCC BAA-1091).